The chain runs to 471 residues: Probable ribonuclease FAU-1 (471 aa).

The protein belongs to the FAU-1 family.

Functionally, probable RNase involved in rRNA stability through maturation and/or degradation of precursor rRNAs. Binds to RNA in loop regions with AU-rich sequences. The sequence is that of Probable ribonuclease FAU-1 from Thermococcus gammatolerans (strain DSM 15229 / JCM 11827 / EJ3).